A 397-amino-acid polypeptide reads, in one-letter code: Chorismate synthase (397 aa).

The NADP(+) site is built by R40 and R46. FMN-binding positions include R129–S131, Q257–A258, G302, K317–S321, and R343.

Belongs to the chorismate synthase family. Homotetramer. Requires FMNH2 as cofactor.

It catalyses the reaction 5-O-(1-carboxyvinyl)-3-phosphoshikimate = chorismate + phosphate. Its pathway is metabolic intermediate biosynthesis; chorismate biosynthesis; chorismate from D-erythrose 4-phosphate and phosphoenolpyruvate: step 7/7. Catalyzes the anti-1,4-elimination of the C-3 phosphate and the C-6 proR hydrogen from 5-enolpyruvylshikimate-3-phosphate (EPSP) to yield chorismate, which is the branch point compound that serves as the starting substrate for the three terminal pathways of aromatic amino acid biosynthesis. This reaction introduces a second double bond into the aromatic ring system. The polypeptide is Chorismate synthase (Pelodictyon phaeoclathratiforme (strain DSM 5477 / BU-1)).